The following is a 253-amino-acid chain: 4-hydroxy-tetrahydrodipicolinate reductase (253 aa).

NAD(+) is bound at residue Gly-16–Met-21. Arg-44 lines the NADP(+) pocket. NAD(+) is bound by residues Gly-85–Thr-87 and Cys-111–Thr-114. His-144 acts as the Proton donor/acceptor in catalysis. Residue His-145 coordinates (S)-2,3,4,5-tetrahydrodipicolinate. The Proton donor role is filled by Lys-148. (S)-2,3,4,5-tetrahydrodipicolinate is bound at residue Gly-154–Thr-155.

The protein belongs to the DapB family.

It localises to the cytoplasm. The enzyme catalyses (S)-2,3,4,5-tetrahydrodipicolinate + NAD(+) + H2O = (2S,4S)-4-hydroxy-2,3,4,5-tetrahydrodipicolinate + NADH + H(+). The catalysed reaction is (S)-2,3,4,5-tetrahydrodipicolinate + NADP(+) + H2O = (2S,4S)-4-hydroxy-2,3,4,5-tetrahydrodipicolinate + NADPH + H(+). The protein operates within amino-acid biosynthesis; L-lysine biosynthesis via DAP pathway; (S)-tetrahydrodipicolinate from L-aspartate: step 4/4. Catalyzes the conversion of 4-hydroxy-tetrahydrodipicolinate (HTPA) to tetrahydrodipicolinate. This Chlamydia trachomatis serovar A (strain ATCC VR-571B / DSM 19440 / HAR-13) protein is 4-hydroxy-tetrahydrodipicolinate reductase.